Reading from the N-terminus, the 249-residue chain is 1-(5-phosphoribosyl)-5-[(5-phosphoribosylamino)methylideneamino] imidazole-4-carboxamide isomerase (249 aa).

The active-site Proton acceptor is Asp8. The active-site Proton donor is Asp129.

Belongs to the HisA/HisF family.

The protein localises to the cytoplasm. The catalysed reaction is 1-(5-phospho-beta-D-ribosyl)-5-[(5-phospho-beta-D-ribosylamino)methylideneamino]imidazole-4-carboxamide = 5-[(5-phospho-1-deoxy-D-ribulos-1-ylimino)methylamino]-1-(5-phospho-beta-D-ribosyl)imidazole-4-carboxamide. It functions in the pathway amino-acid biosynthesis; L-histidine biosynthesis; L-histidine from 5-phospho-alpha-D-ribose 1-diphosphate: step 4/9. The sequence is that of 1-(5-phosphoribosyl)-5-[(5-phosphoribosylamino)methylideneamino] imidazole-4-carboxamide isomerase from Nitratidesulfovibrio vulgaris (strain ATCC 29579 / DSM 644 / CCUG 34227 / NCIMB 8303 / VKM B-1760 / Hildenborough) (Desulfovibrio vulgaris).